A 173-amino-acid chain; its full sequence is Mesencephalic astrocyte-derived neurotrophic factor homolog (173 aa).

Positions 1 to 22 (MKTTHLVLVLCFLAGVAQTTLA) are cleaved as a signal peptide. 4 cysteine pairs are disulfide-bonded: C28–C114, C31–C103, C61–C72, and C148–C151.

It belongs to the ARMET family.

The protein localises to the secreted. Required during the maturation of the embryonic nervous system for maintenance of neuronal and cuticular connectivity. Essential for maintenance of dopaminergic neurons and dopamine levels. The protein is Mesencephalic astrocyte-derived neurotrophic factor homolog of Drosophila persimilis (Fruit fly).